A 352-amino-acid chain; its full sequence is C-C chemokine receptor type 5 (352 aa).

The Extracellular portion of the chain corresponds to 1–30; sequence MDYQVSSPTYDIDYYTSEPCQKINVKQIAA. Sulfotyrosine is present on Tyr3. O-linked (GalNAc...) serine glycosylation is found at Ser6 and Ser7. Residues Tyr10, Tyr14, and Tyr15 each carry the sulfotyrosine modification. Intrachain disulfides connect Cys20-Cys269 and Cys101-Cys178. Residues 31-58 traverse the membrane as a helical segment; sequence RLLPPLYSLVFIFGFVGNMLVILILINC. Residues 59-68 are Cytoplasmic-facing; that stretch reads KRLKSMTDIY. Residues 69–89 form a helical membrane-spanning segment; that stretch reads LLNLAISDLFFLLTVPFWAHY. Topologically, residues 90-102 are extracellular; the sequence is AAAQWDFGNTMCQ. The helical transmembrane segment at 103–124 threads the bilayer; it reads LLTGLYFIGFFSGIFFIILLTI. Residues 125 to 141 are Cytoplasmic-facing; the sequence is DRYLAIVHAVFALKART. Residues 142-166 traverse the membrane as a helical segment; that stretch reads VTFGVVTSVITWVVAVFASLPGIIF. Over 167-198 the chain is Extracellular; that stretch reads TRSQKEGLHYTCSSHFPYSQYQFWKNFQTLKI. Residues 199–218 traverse the membrane as a helical segment; that stretch reads VILGLVLPLLVMVICYSGIL. Topologically, residues 219 to 235 are cytoplasmic; sequence KTLLRCRNEKKRHRAVR. Residues 236–260 traverse the membrane as a helical segment; the sequence is LIFTIMIVYFLFWAPYNIVLLLNTF. Over 261–277 the chain is Extracellular; sequence QEFFGLNNCSSSNRLDQ. Residues 278 to 301 form a helical membrane-spanning segment; it reads AMQVTETLGMTHCCINPIIYAFVG. The Cytoplasmic segment spans residues 302-352; it reads EKFRNYLLVFFQKHIAKRFCKCCSIFQQEAPERASSVYTRSTGEQEISVGL. 3 S-palmitoyl cysteine lipidation sites follow: Cys321, Cys323, and Cys324. Ser336, Ser337, Ser342, and Ser349 each carry phosphoserine; by BARK1.

This sequence belongs to the G-protein coupled receptor 1 family. In terms of assembly, interacts with PRAF2. Efficient ligand binding to CCL3/MIP-1alpha and CCL4/MIP-1beta requires sulfation, O-glycosylation and sialic acid modifications. Glycosylation on Ser-6 is required for efficient binding of CCL4. Interacts with GRK2. Interacts with ARRB1 and ARRB2. Interacts with CNIH4. Interacts with S100A4; this interaction stimulates T-lymphocyte chemotaxis. Sulfated on at least 2 of the N-terminal tyrosines. Sulfation is required for efficient binding of the chemokines, CCL3 and CCL4. Post-translationally, palmitoylation in the C-terminal is important for cell surface expression. In terms of processing, phosphorylation on serine residues in the C-terminal is stimulated by binding CC chemokines especially by APO-RANTES. O-glycosylated, but not N-glycosylated. Ser-6 appears to be the major site even if Ser-7 may be also O-glycosylated. Also sialylated glycans present which contribute to chemokine binding. Thr-16 and Ser-17 may also be glycosylated and, if so, with small moieties such as a T-antigen.

The protein localises to the cell membrane. Receptor for a number of inflammatory CC-chemokines including CCL3/MIP-1-alpha, CCL4/MIP-1-beta and RANTES and subsequently transduces a signal by increasing the intracellular calcium ion level. May play a role in the control of granulocytic lineage proliferation or differentiation. Participates in T-lymphocyte migration to the infection site by acting as a chemotactic receptor. This Pongo abelii (Sumatran orangutan) protein is C-C chemokine receptor type 5 (CCR5).